The chain runs to 102 residues: Putative pterin-4-alpha-carbinolamine dehydratase (102 aa).

It belongs to the pterin-4-alpha-carbinolamine dehydratase family.

It carries out the reaction (4aS,6R)-4a-hydroxy-L-erythro-5,6,7,8-tetrahydrobiopterin = (6R)-L-erythro-6,7-dihydrobiopterin + H2O. This chain is Putative pterin-4-alpha-carbinolamine dehydratase, found in Burkholderia cenocepacia (strain HI2424).